The following is a 507-amino-acid chain: ATP synthase subunit alpha 2 (507 aa).

ATP is bound at residue 171 to 178 (GDRATGKT).

This sequence belongs to the ATPase alpha/beta chains family. As to quaternary structure, F-type ATPases have 2 components, CF(1) - the catalytic core - and CF(0) - the membrane proton channel. CF(1) has five subunits: alpha(3), beta(3), gamma(1), delta(1), epsilon(1). CF(0) has three main subunits: a(1), b(2) and c(9-12). The alpha and beta chains form an alternating ring which encloses part of the gamma chain. CF(1) is attached to CF(0) by a central stalk formed by the gamma and epsilon chains, while a peripheral stalk is formed by the delta and b chains.

The protein localises to the cell inner membrane. It carries out the reaction ATP + H2O + 4 H(+)(in) = ADP + phosphate + 5 H(+)(out). Its function is as follows. Produces ATP from ADP in the presence of a proton gradient across the membrane. The alpha chain is a regulatory subunit. The protein is ATP synthase subunit alpha 2 of Gluconobacter oxydans (strain 621H) (Gluconobacter suboxydans).